A 407-amino-acid polypeptide reads, in one-letter code: Na(+)-translocating NADH-quinone reductase subunit F (407 aa).

A helical membrane pass occupies residues Ile-4–Gly-24. In terms of domain architecture, 2Fe-2S ferredoxin-type spans Gly-33 to Val-125. [2Fe-2S] cluster contacts are provided by Cys-68, Cys-74, Cys-77, and Cys-109. The 142-residue stretch at Val-128–Arg-269 folds into the FAD-binding FR-type domain.

It belongs to the NqrF family. As to quaternary structure, composed of six subunits; NqrA, NqrB, NqrC, NqrD, NqrE and NqrF. [2Fe-2S] cluster is required as a cofactor. It depends on FAD as a cofactor.

The protein localises to the cell inner membrane. The catalysed reaction is a ubiquinone + n Na(+)(in) + NADH + H(+) = a ubiquinol + n Na(+)(out) + NAD(+). Functionally, NQR complex catalyzes the reduction of ubiquinone-1 to ubiquinol by two successive reactions, coupled with the transport of Na(+) ions from the cytoplasm to the periplasm. The first step is catalyzed by NqrF, which accepts electrons from NADH and reduces ubiquinone-1 to ubisemiquinone by a one-electron transfer pathway. The protein is Na(+)-translocating NADH-quinone reductase subunit F of Methylococcus capsulatus (strain ATCC 33009 / NCIMB 11132 / Bath).